Here is a 269-residue protein sequence, read N- to C-terminus: Diaminopimelate epimerase (269 aa).

Asn-15, Gln-49, and Asn-66 together coordinate substrate. Catalysis depends on Cys-75, which acts as the Proton donor. Substrate is bound by residues Gly-76 to Asn-77, Asn-155, Asn-187, and Glu-204 to Arg-205. The Proton acceptor role is filled by Cys-213. A substrate-binding site is contributed by Gly-214–Ser-215.

Belongs to the diaminopimelate epimerase family. As to quaternary structure, homodimer.

It is found in the cytoplasm. The enzyme catalyses (2S,6S)-2,6-diaminopimelate = meso-2,6-diaminopimelate. Its pathway is amino-acid biosynthesis; L-lysine biosynthesis via DAP pathway; DL-2,6-diaminopimelate from LL-2,6-diaminopimelate: step 1/1. Catalyzes the stereoinversion of LL-2,6-diaminopimelate (L,L-DAP) to meso-diaminopimelate (meso-DAP), a precursor of L-lysine and an essential component of the bacterial peptidoglycan. The polypeptide is Diaminopimelate epimerase (Rickettsia canadensis (strain McKiel)).